The following is a 367-amino-acid chain: Otolith matrix protein 1 (367 aa).

The N-terminal stretch at 1 to 23 (MDRLDRRLAATLLLFSFISFSTQ) is a signal peptide. The region spanning 27–363 (ISWCVVSEAE…YTTVLQAFEC (337 aa)) is the Transferrin-like domain.

It belongs to the transferrin family. As to quaternary structure, interacts with OTOL1. Expressed in the sacculus during the day.

It localises to the secreted. In terms of biological role, required for normal otolith growth and deposition of otolin-1 in the otolith. This Oncorhynchus mykiss (Rainbow trout) protein is Otolith matrix protein 1 (otomp).